A 307-amino-acid polypeptide reads, in one-letter code: Coenzyme PQQ synthesis protein B (307 aa).

It belongs to the PqqB family.

The protein operates within cofactor biosynthesis; pyrroloquinoline quinone biosynthesis. Functionally, may be involved in the transport of PQQ or its precursor to the periplasm. The sequence is that of Coenzyme PQQ synthesis protein B from Gluconacetobacter diazotrophicus (strain ATCC 49037 / DSM 5601 / CCUG 37298 / CIP 103539 / LMG 7603 / PAl5).